A 73-amino-acid polypeptide reads, in one-letter code: Large ribosomal subunit protein bL31 (73 aa).

Positions 16, 18, 36, and 39 each coordinate Zn(2+).

This sequence belongs to the bacterial ribosomal protein bL31 family. Type A subfamily. As to quaternary structure, part of the 50S ribosomal subunit. Zn(2+) serves as cofactor.

In terms of biological role, binds the 23S rRNA. This chain is Large ribosomal subunit protein bL31, found in Myxococcus xanthus (strain DK1622).